A 926-amino-acid polypeptide reads, in one-letter code: Beta-mannosidase A (926 aa).

Residues 1-21 (MHVKAETVLALLTPAPPSVVG) form the signal peptide. N-linked (GlcNAc...) asparagine glycans are attached at residues Asn40, Asn242, Asn277, Asn311, and Asn342. The active-site Proton donor is the Glu474. 10 N-linked (GlcNAc...) asparagine glycosylation sites follow: Asn532, Asn603, Asn626, Asn653, Asn733, Asn756, Asn785, Asn793, Asn819, and Asn905.

The protein belongs to the glycosyl hydrolase 2 family. Beta-mannosidase A subfamily. In terms of assembly, homodimer.

Its subcellular location is the secreted. It catalyses the reaction Hydrolysis of terminal, non-reducing beta-D-mannose residues in beta-D-mannosides.. The protein operates within glycan metabolism; N-glycan degradation. Functionally, exoglycosidase that cleaves the single beta-linked mannose residue from the non-reducing end of beta-mannosidic oligosaccharides of various complexity and length. Involved in the degradation of polymeric mannan and galactomannan. This is Beta-mannosidase A (mndA) from Aspergillus fumigatus (strain CBS 144.89 / FGSC A1163 / CEA10) (Neosartorya fumigata).